The primary structure comprises 480 residues: Cyclin L homolog cyl-1 (480 aa).

The disordered stretch occupies residues 25–58 (PKEQNGNVEPKKEEDEKFESTYKQNENTQITPSS). The span at 33 to 44 (EPKKEEDEKFES) shows a compositional bias: basic and acidic residues. Polar residues predominate over residues 45 to 58 (TYKQNENTQITPSS). In terms of domain architecture, Cyclin N-terminal spans 91–230 (PSLVDGLSKE…RRILATLGFV (140 aa)). The disordered stretch occupies residues 368–480 (KMAPDGEKST…ESSTPPRSRR (113 aa)). Basic and acidic residues-rich tracts occupy residues 384–409 (KDSRKVSPDRKNGTKDRGEADRGKKE) and 418–442 (NDRDGRGDRRDRDKDRGDRRKDEKK). A compositionally biased stretch (basic residues) spans 443 to 453 (DRRKRTRSRSR). The span at 454-472 (DRKDKNRNRDVGKRYRKES) shows a compositional bias: basic and acidic residues.

Belongs to the cyclin family.

Functionally, involved in pre-mRNA splicing. Functions in association with cyclin-dependent kinases (CDKs). Involved in induction of expression of heat shock protein hsp-16.2 in response to heat shock. Plays a role in male tail development, perhaps acting together with cell cycle regulators cdc-25.2, cdk-1, cyb-3, and cyd-1. The chain is Cyclin L homolog cyl-1 from Caenorhabditis elegans.